We begin with the raw amino-acid sequence, 202 residues long: Adenosylcobalamin/alpha-ribazole phosphatase (202 aa).

The active-site Tele-phosphohistidine intermediate is His-8. The active-site Proton donor/acceptor is the Glu-81.

Belongs to the phosphoglycerate mutase family. As to quaternary structure, monomer.

The enzyme catalyses adenosylcob(III)alamin 5'-phosphate + H2O = adenosylcob(III)alamin + phosphate. It catalyses the reaction alpha-ribazole 5'-phosphate + H2O = alpha-ribazole + phosphate. It participates in nucleoside biosynthesis; alpha-ribazole biosynthesis; alpha-ribazole from 5,6-dimethylbenzimidazole: step 2/2. In terms of biological role, catalyzes the conversion of adenosylcobalamin 5'-phosphate to adenosylcobalamin (vitamin B12); involved in the assembly of the nucleotide loop of cobalamin. Also catalyzes the hydrolysis of the phospho group from alpha-ribazole 5'-phosphate to form alpha-ribazole. This Salmonella typhimurium (strain LT2 / SGSC1412 / ATCC 700720) protein is Adenosylcobalamin/alpha-ribazole phosphatase (cobC).